Reading from the N-terminus, the 94-residue chain is MRRSTIVPTSRTSSSSPSPSQMKSFQMNRLVDQLSKLQSNMSHLENHLHVTAIQAEAIRRLGALQASLLMASGRVMSEARIQKSSDAVEEDVPM.

Low complexity predominate over residues 1–20; the sequence is MRRSTIVPTSRTSSSSPSPS. The tract at residues 1–25 is disordered; sequence MRRSTIVPTSRTSSSSPSPSQMKSF.

The protein belongs to the DASH complex HSK3 family. As to quaternary structure, component of the DASH complex consisting of ask1, dad1, dad2, dad3, dad4, dam1, duo1, dad5, spc19 and spc34, with a stoichiometry of one copy of each subunit per complex. Multiple DASH complexes oligomerize to form a ring that encircles spindle microtubules and organizes the rod-like NDC80 complexes of the outer kinetochore. DASH complex oligomerization strengthens microtubule attachments. On cytoplasmic microtubules, DASH complexes appear to form patches instead of rings.

The protein resides in the nucleus. The protein localises to the cytoplasm. Its subcellular location is the cytoskeleton. It localises to the spindle. It is found in the chromosome. The protein resides in the centromere. The protein localises to the kinetochore. In terms of biological role, component of the DASH complex that connects microtubules with kinetochores and couples microtubule depolymerisation to chromosome movement; it is involved in retrieving kinetochores to the spindle poles before their re-orientation on the spindle in early mitosis and allows microtubule depolymerization to pull chromosomes apart and resist detachment during anaphase. Kinetochores, consisting of a centromere-associated inner segment and a microtubule-contacting outer segment, play a crucial role in chromosome segregation by mediating the physical connection between centromeric DNA and microtubules. Kinetochores also serve as an input point for the spindle assembly checkpoint, which delays anaphase until all chromosomes have bioriented on the mitotic spindle. The DASH complex mediates bipolar kinetochore-microtubule attachments and facilitates the formation of additional interactions between outer kinetochore components and spindle microtubules. During chromosome movement along the microtubule, it is required both for the sliding of kinetochores along the lateral side of the microtubule and also for microtubule end-on pulling on the kinetochore. Modulates cytoplasmic microtubule dynamics by tracking the plus-end of shortening microtubules and slowing their depolymerization. The chain is DASH complex subunit DAD5 from Schizosaccharomyces pombe (strain 972 / ATCC 24843) (Fission yeast).